The following is a 736-amino-acid chain: 1,4-alpha-glucan branching enzyme GlgB (736 aa).

The active-site Nucleophile is Asp419. Glu472 functions as the Proton donor in the catalytic mechanism.

The protein belongs to the glycosyl hydrolase 13 family. GlgB subfamily. As to quaternary structure, monomer.

It catalyses the reaction Transfers a segment of a (1-&gt;4)-alpha-D-glucan chain to a primary hydroxy group in a similar glucan chain.. It participates in glycan biosynthesis; glycogen biosynthesis. Catalyzes the formation of the alpha-1,6-glucosidic linkages in glycogen by scission of a 1,4-alpha-linked oligosaccharide from growing alpha-1,4-glucan chains and the subsequent attachment of the oligosaccharide to the alpha-1,6 position. The polypeptide is 1,4-alpha-glucan branching enzyme GlgB (Rhizobium meliloti (strain 1021) (Ensifer meliloti)).